Here is a 62-residue protein sequence, read N- to C-terminus: UPF0434 protein R03186 (62 aa).

Belongs to the UPF0434 family.

This is UPF0434 protein R03186 from Rhizobium meliloti (strain 1021) (Ensifer meliloti).